The primary structure comprises 460 residues: Armadillo repeat-containing protein LFR (460 aa).

Residues 1 to 30 (MQKRELGKSGGNSGGSSGPPAKRGRPFGST) form a disordered region. The span at 8–17 (KSGGNSGGSS) shows a compositional bias: gly residues. ARM repeat units follow at residues 227–269 (DNEV…NLAH), 323–362 (NEPFISPLIPQIHKRLIDLLSIQAVDAQAAAVGALYNLVE), and 366–407 (DCRL…NLVS).

In terms of assembly, interacts with AS2. In terms of tissue distribution, expressed in roots, leaves, stems and flowers.

The protein resides in the nucleus. In terms of biological role, involved in leaf and flower development. Plays roles in leaf development partly by associating with AS2 and repressing KNAT1/BP transcription. Required for the formation of anther cell layers and normal expression of genes that regulates anther development. This is Armadillo repeat-containing protein LFR from Arabidopsis thaliana (Mouse-ear cress).